A 140-amino-acid chain; its full sequence is Phosphoribosyl-AMP cyclohydrolase (140 aa).

Position 78 (aspartate 78) interacts with Mg(2+). Cysteine 79 contributes to the Zn(2+) binding site. The Mg(2+) site is built by aspartate 80 and aspartate 82. 2 residues coordinate Zn(2+): cysteine 96 and cysteine 103.

The protein belongs to the PRA-CH family. In terms of assembly, homodimer. Mg(2+) is required as a cofactor. It depends on Zn(2+) as a cofactor.

The protein resides in the cytoplasm. The enzyme catalyses 1-(5-phospho-beta-D-ribosyl)-5'-AMP + H2O = 1-(5-phospho-beta-D-ribosyl)-5-[(5-phospho-beta-D-ribosylamino)methylideneamino]imidazole-4-carboxamide. It participates in amino-acid biosynthesis; L-histidine biosynthesis; L-histidine from 5-phospho-alpha-D-ribose 1-diphosphate: step 3/9. Its function is as follows. Catalyzes the hydrolysis of the adenine ring of phosphoribosyl-AMP. This chain is Phosphoribosyl-AMP cyclohydrolase, found in Ralstonia nicotianae (strain ATCC BAA-1114 / GMI1000) (Ralstonia solanacearum).